Here is a 71-residue protein sequence, read N- to C-terminus: Large ribosomal subunit protein bL28 (71 aa).

Belongs to the bacterial ribosomal protein bL28 family.

This chain is Large ribosomal subunit protein bL28, found in Rubrobacter xylanophilus (strain DSM 9941 / JCM 11954 / NBRC 16129 / PRD-1).